A 228-amino-acid polypeptide reads, in one-letter code: MLTRKQMELLDFIKTRMDRDGVPPSFDEMKDALDLRSKSGIHRLITALEERGFIRRLAHRARAIEIVKLPEAMERAGFSARAAKAAAAPLPKGAVTVETAGALDLPLMGRIAAGLPIEAINGGPQSVTVPGMMLSGRGQHYALEVKGDSMIAAGINDGDIVVIREQQTADNGDIVVALVADHEATLKRYRRRGGMIALEPANDSYETQVYPEQMVKVQGRLVGLIRSY.

The segment at residues 26–46 (FDEMKDALDLRSKSGIHRLIT) is a DNA-binding region (H-T-H motif). Active-site for autocatalytic cleavage activity residues include Ser149 and Lys187.

This sequence belongs to the peptidase S24 family. Homodimer.

The catalysed reaction is Hydrolysis of Ala-|-Gly bond in repressor LexA.. In terms of biological role, represses a number of genes involved in the response to DNA damage (SOS response), including recA and lexA. Has been shown to bind to the direct repeat sequence 5'-GTT-N(7)-GTTC-3'. In the presence of single-stranded DNA, RecA interacts with LexA causing an autocatalytic cleavage which disrupts the DNA-binding part of LexA, leading to derepression of the SOS regulon and eventually DNA repair. In Cereibacter sphaeroides (strain ATCC 17023 / DSM 158 / JCM 6121 / CCUG 31486 / LMG 2827 / NBRC 12203 / NCIMB 8253 / ATH 2.4.1.) (Rhodobacter sphaeroides), this protein is LexA repressor.